The following is a 100-amino-acid chain: MIPLQHGLILAAILFVLGLTGLLIRRNLLFMLISLEIMINAAALAFVVAGSYWQQPDGQVMYILAITLAAAEASIGLALLLQMYRRRQTLNIDTVSEMRG.

Transmembrane regions (helical) follow at residues 4-24 (LQHGLILAAILFVLGLTGLLI), 28-48 (LLFMLISLEIMINAAALAFVV), and 60-80 (VMYILAITLAAAEASIGLALL).

It belongs to the complex I subunit 4L family. As to quaternary structure, NDH-1 is composed of 13 different subunits. Subunits NuoA, H, J, K, L, M, N constitute the membrane sector of the complex.

Its subcellular location is the cell inner membrane. It catalyses the reaction a quinone + NADH + 5 H(+)(in) = a quinol + NAD(+) + 4 H(+)(out). Its function is as follows. NDH-1 shuttles electrons from NADH, via FMN and iron-sulfur (Fe-S) centers, to quinones in the respiratory chain. The immediate electron acceptor for the enzyme in this species is believed to be ubiquinone. Couples the redox reaction to proton translocation (for every two electrons transferred, four hydrogen ions are translocated across the cytoplasmic membrane), and thus conserves the redox energy in a proton gradient. This is NADH-quinone oxidoreductase subunit K from Pectobacterium carotovorum subsp. carotovorum (strain PC1).